The sequence spans 136 residues: Large ribosomal subunit protein uL16 (136 aa).

It belongs to the universal ribosomal protein uL16 family. Part of the 50S ribosomal subunit.

Its function is as follows. Binds 23S rRNA and is also seen to make contacts with the A and possibly P site tRNAs. This Pasteurella multocida (strain Pm70) protein is Large ribosomal subunit protein uL16.